Here is a 428-residue protein sequence, read N- to C-terminus: Adenylosuccinate synthetase (428 aa).

GTP contacts are provided by residues 12–18 and 40–42; these read GDEGKGK and GHT. The active-site Proton acceptor is the Asp-13. The Mg(2+) site is built by Asp-13 and Gly-40. IMP-binding positions include 13-16, 38-41, Thr-128, Arg-142, Gln-222, Thr-237, and Arg-301; these read DEGK and NAGH. Catalysis depends on His-41, which acts as the Proton donor. 297–303 is a substrate binding site; that stretch reads VNTGRAR. Residues Arg-303, 329-331, and 411-413 contribute to the GTP site; these read KLD and STS.

It belongs to the adenylosuccinate synthetase family. In terms of assembly, homodimer. The cofactor is Mg(2+).

The protein localises to the cytoplasm. It catalyses the reaction IMP + L-aspartate + GTP = N(6)-(1,2-dicarboxyethyl)-AMP + GDP + phosphate + 2 H(+). Its pathway is purine metabolism; AMP biosynthesis via de novo pathway; AMP from IMP: step 1/2. In terms of biological role, plays an important role in the de novo pathway of purine nucleotide biosynthesis. Catalyzes the first committed step in the biosynthesis of AMP from IMP. The chain is Adenylosuccinate synthetase from Caulobacter vibrioides (strain ATCC 19089 / CIP 103742 / CB 15) (Caulobacter crescentus).